Here is a 184-residue protein sequence, read N- to C-terminus: Peptide deformylase 2 (184 aa).

Positions 110 and 153 each coordinate Fe cation. Residue E154 is part of the active site. H157 serves as a coordination point for Fe cation.

The protein belongs to the polypeptide deformylase family. Requires Fe(2+) as cofactor.

The enzyme catalyses N-terminal N-formyl-L-methionyl-[peptide] + H2O = N-terminal L-methionyl-[peptide] + formate. In terms of biological role, removes the formyl group from the N-terminal Met of newly synthesized proteins. Requires at least a dipeptide for an efficient rate of reaction. N-terminal L-methionine is a prerequisite for activity but the enzyme has broad specificity at other positions. In Geobacillus stearothermophilus (Bacillus stearothermophilus), this protein is Peptide deformylase 2.